A 438-amino-acid chain; its full sequence is MADYQDKNVVIIGLGLTGLSCVDFFLARGVTPRVMDTRVTPPGLDKLPQEVERHVGGLNDEWLLAADLIVASPGIALAHPSLSAAASAGVEIVGDIELFCREAQAPIVAITGSNGKSTVTTLVGEMAKAAGVNVGVGGNIGLPALMLLDADRELYVLELSSFQLETTSSLQAAAATVLNVTEDHMDRYPFGLQQYRAAKLRVYEKAKVCVVNADDALTMPVRGADERCVSFGVNMGDYHLNRQQGETWLRVKGEKVLNVKEMKLSGQHNYTNALAALALADAVGLPRASSLKALTTFTGLAHRFQLALEHNGVRWINDSKATNVGSTEAALNGLHVDGTLHLLLGGDGKSADFSPLARYLTGDRIRLYCFGRDGAQLAALRPEIAQQTETMEEAMRLLAPHVQPGDMVLLSPACASLDQFKNFEQRGDVFTRLAKELG.

112 to 118 is a binding site for ATP; the sequence is GSNGKST.

This sequence belongs to the MurCDEF family.

Its subcellular location is the cytoplasm. It catalyses the reaction UDP-N-acetyl-alpha-D-muramoyl-L-alanine + D-glutamate + ATP = UDP-N-acetyl-alpha-D-muramoyl-L-alanyl-D-glutamate + ADP + phosphate + H(+). The protein operates within cell wall biogenesis; peptidoglycan biosynthesis. Its function is as follows. Cell wall formation. Catalyzes the addition of glutamate to the nucleotide precursor UDP-N-acetylmuramoyl-L-alanine (UMA). This Salmonella typhi protein is UDP-N-acetylmuramoylalanine--D-glutamate ligase.